The following is a 179-amino-acid chain: UPF0134 protein MPN_145 (179 aa).

Belongs to the UPF0134 family.

This chain is UPF0134 protein MPN_145, found in Mycoplasma pneumoniae (strain ATCC 29342 / M129 / Subtype 1) (Mycoplasmoides pneumoniae).